The following is a 328-amino-acid chain: MTPELLTTLLITGGGLIALAVFFTFVPVGLWISSFAAGVHVSIFTLIGMRLRRVIPSKIVNPLIKAVKAGIELNTNQLESHFLAGGNVDRVVNALIAAHRANIELSFERAAAIDLAGRNVLEAVQMSVNPKVIETPFIAGVAMDGIEVKAKARITVRANIDRLVGGAGEETIIARVGEGVVSTIGSQNNHKHVLENPDMISRTVLTKGLDSGTAFEILSIDIADIDIGKNIGAVLQTDQAEADKKIAQAKAEERRAMAIAREQEMKSSVEEMRAKVVGAEAEVPLAMAEALRNGKLGVMDYVNYLNVQADTEMRKAIGAPVDSESDNE.

2 consecutive transmembrane segments (helical) span residues 9–29 (LLIT…VPVG) and 30–50 (LWIS…IGMR).

The protein belongs to the flotillin-like FloA family. In terms of assembly, homooligomerizes.

The protein localises to the cell membrane. The protein resides in the membrane raft. Its function is as follows. Found in functional membrane microdomains (FMM) that may be equivalent to eukaryotic membrane rafts. FMMs are highly dynamic and increase in number as cells age. Flotillins are thought to be important factors in membrane fluidity. The polypeptide is Flotillin-like protein FloA (Exiguobacterium sp. (strain ATCC BAA-1283 / AT1b)).